A 31-amino-acid polypeptide reads, in one-letter code: Photosystem I reaction center subunit XII (31 aa).

A helical membrane pass occupies residues 7 to 26 (QVYVALVIALLPAVLAFRLS).

Belongs to the PsaM family.

Its subcellular location is the cellular thylakoid membrane. The chain is Photosystem I reaction center subunit XII from Thermosynechococcus vestitus (strain NIES-2133 / IAM M-273 / BP-1).